Consider the following 289-residue polypeptide: Enoyl-CoA hydratase domain-containing protein 3, mitochondrial (289 aa).

Residues 1–14 (MLLRGFSELLKCRG) constitute a mitochondrion transit peptide.

Belongs to the enoyl-CoA hydratase/isomerase family.

It is found in the mitochondrion. May play a role in fatty acid biosynthesis and insulin sensitivity. This chain is Enoyl-CoA hydratase domain-containing protein 3, mitochondrial (echdc3), found in Danio rerio (Zebrafish).